We begin with the raw amino-acid sequence, 149 residues long: Early lymphoid activation gene protein (149 aa).

Expressed in heart, kidney, lung, and skeletal muscle, with lower levels in pancreas and liver.

Functionally, may function as an early signal that helps mediate the activation of T-cells. This chain is Early lymphoid activation gene protein (DIAPH2-AS1), found in Homo sapiens (Human).